The following is a 331-amino-acid chain: Ketol-acid reductoisomerase (NADP(+)) (331 aa).

The 181-residue stretch at 2–182 (AKVYYDEDAN…GGTKGGVLET (181 aa)) folds into the KARI N-terminal Rossmann domain. NADP(+) contacts are provided by residues 25-28 (YGSQ), Ser51, Ser53, and 83-86 (DEKQ). His108 is an active-site residue. Position 134 (Gly134) interacts with NADP(+). Positions 183–328 (TFKDETETDL…VELRAMMPWL (146 aa)) constitute a KARI C-terminal knotted domain. Residues Asp191, Glu195, Glu227, and Glu231 each contribute to the Mg(2+) site. Residue Ser252 participates in substrate binding.

The protein belongs to the ketol-acid reductoisomerase family. Requires Mg(2+) as cofactor.

The catalysed reaction is (2R)-2,3-dihydroxy-3-methylbutanoate + NADP(+) = (2S)-2-acetolactate + NADPH + H(+). It catalyses the reaction (2R,3R)-2,3-dihydroxy-3-methylpentanoate + NADP(+) = (S)-2-ethyl-2-hydroxy-3-oxobutanoate + NADPH + H(+). Its pathway is amino-acid biosynthesis; L-isoleucine biosynthesis; L-isoleucine from 2-oxobutanoate: step 2/4. The protein operates within amino-acid biosynthesis; L-valine biosynthesis; L-valine from pyruvate: step 2/4. In terms of biological role, involved in the biosynthesis of branched-chain amino acids (BCAA). Catalyzes an alkyl-migration followed by a ketol-acid reduction of (S)-2-acetolactate (S2AL) to yield (R)-2,3-dihydroxy-isovalerate. In the isomerase reaction, S2AL is rearranged via a Mg-dependent methyl migration to produce 3-hydroxy-3-methyl-2-ketobutyrate (HMKB). In the reductase reaction, this 2-ketoacid undergoes a metal-dependent reduction by NADPH to yield (R)-2,3-dihydroxy-isovalerate. This chain is Ketol-acid reductoisomerase (NADP(+)), found in Clostridium novyi (strain NT).